A 580-amino-acid chain; its full sequence is Frizzled and smoothened-like protein K (580 aa).

The first 18 residues, 1 to 18 (MRVLFILFLFYFYTYTEA), serve as a signal peptide directing secretion. Residues 19 to 236 (QQYYPIDPTG…QWDNIFDTSD (218 aa)) are Extracellular-facing. An FZ domain is found at 25 to 154 (DPTGKCEQYI…SSDYNLTTYG (130 aa)). N-linked (GlcNAc...) asparagine glycans are attached at residues N52, N97, N149, N170, and N186. Residues 237 to 257 (AISLVSLLCSVYLFITYMVIN) traverse the membrane as a helical segment. The Cytoplasmic portion of the chain corresponds to 258-264 (PKRNKYD). Residues 265–285 (YFFSFFVLSIILMSIAGTIGF) traverse the membrane as a helical segment. At 286 to 308 (SVGGTRKLLCPEINRRGVYTDPA) the chain is on the extracellular side. Residues 309-329 (VAAAGWIFQFAIINAILWFSI) traverse the membrane as a helical segment. At 330-349 (NSFELWFQIKFIKRKLHLIK) the chain is on the cytoplasmic side. A helical membrane pass occupies residues 350–370 (FYILAVLVISIALSVPLSAIG). Topologically, residues 371-391 (EFNAGLGNFVVWIESGKYQNW) are extracellular. A helical membrane pass occupies residues 392–412 (FFWGPLGIVLTVGTTFIGLVI). Topologically, residues 413 to 434 (WEIYKIVSSTNKSDFFKLQLKP) are cytoplasmic. A helical membrane pass occupies residues 435–455 (LMNMLLIYLTFVYLFGYNFYI). Residues 456–490 (HNSLNGFYGSSEEFKNCIISTDGKDCRIQGPPYSS) lie on the Extracellular side of the membrane. A helical transmembrane segment spans residues 491–511 (ILMFVFCLRIYGVYCIALYGF). Over 512–580 (SPKTRSIWSN…SMEPDEIILR (69 aa)) the chain is Cytoplasmic. The Lys-Thr-X-X-X-Trp motif, mediates interaction with the PDZ domain of Dvl family members signature appears at 514-519 (KTRSIW). The tract at residues 542–580 (TTKGGTSSTDIKMSTNNNSNMDSGGGKSSSMEPDEIILR) is disordered. The span at 551 to 563 (DIKMSTNNNSNMD) shows a compositional bias: polar residues.

Belongs to the G-protein coupled receptor Fz/Smo family.

Its subcellular location is the membrane. In Dictyostelium discoideum (Social amoeba), this protein is Frizzled and smoothened-like protein K (fslK).